Here is a 190-residue protein sequence, read N- to C-terminus: uncharacterized protein (190 aa).

The Cytoplasmic segment spans residues 1-16 (MAILPEFISQTPPVTR). The chain crosses the membrane as a helical span at residues 17–37 (YIVLGTLFTTLAVNFGYVSDL). Residues 38–55 (KIFFNWKLFLAKGEYWRA) lie on the Lumenal side of the membrane. The chain crosses the membrane as a helical span at residues 56–76 (ITTFLYVGPFGLELILYLSFL). The Cytoplasmic segment spans residues 77-98 (LRFMSMLERSSPPPQTQSFLKT). The chain crosses the membrane as a helical span at residues 99-119 (VLIVWFSLLVTSYFSYMPFAA). Residues 120–138 (SYFSFTMLYIWSWKHPLYR) lie on the Lumenal side of the membrane. A helical transmembrane segment spans residues 139-159 (ISILGLFDVKAPYVPWVMVLL). Residues 160 to 163 (RWLR) are Cytoplasmic-facing. A helical membrane pass occupies residues 164–184 (TGIFPLLDLISALIGHVYFFV). The Lumenal segment spans residues 185-190 (TDFSTV).

It belongs to the derlin family.

It is found in the endoplasmic reticulum membrane. This is an uncharacterized protein from Schizosaccharomyces pombe (strain 972 / ATCC 24843) (Fission yeast).